A 31-amino-acid polypeptide reads, in one-letter code: Conotoxin pc6b (31 aa).

Cystine bridges form between cysteine 2–cysteine 20, cysteine 9–cysteine 25, and cysteine 19–cysteine 29.

The protein belongs to the conotoxin O1 superfamily. Expressed by the venom duct.

It localises to the secreted. In Conus pictus (Cone snail), this protein is Conotoxin pc6b.